The chain runs to 61 residues: Large ribosomal subunit protein eL24 (61 aa).

The Zn(2+) site is built by C7, C10, C33, and C37. Residues 7–37 (CTYCGRSIEPGTGLMYVKNDGSVLWFCSSKC) form a C4-type zinc finger.

This sequence belongs to the eukaryotic ribosomal protein eL24 family. As to quaternary structure, part of the 50S ribosomal subunit. Forms a cluster with proteins L3 and L14. Requires Zn(2+) as cofactor.

Binds to the 23S rRNA. This is Large ribosomal subunit protein eL24 from Hyperthermus butylicus (strain DSM 5456 / JCM 9403 / PLM1-5).